The chain runs to 545 residues: Ribulokinase (545 aa).

The protein belongs to the ribulokinase family.

It catalyses the reaction D-ribulose + ATP = D-ribulose 5-phosphate + ADP + H(+). It carries out the reaction L-ribulose + ATP = L-ribulose 5-phosphate + ADP + H(+). It participates in carbohydrate degradation; L-arabinose degradation via L-ribulose; D-xylulose 5-phosphate from L-arabinose (bacterial route): step 2/3. This is Ribulokinase from Staphylococcus aureus (strain MSSA476).